A 435-amino-acid chain; its full sequence is Aspartate aminotransferase (435 aa).

Residues Tyr-69 and 100–101 each bind pyridoxal 5'-phosphate; that span reads SL. 139 to 141 serves as a coordination point for substrate; it reads YDR. Pyridoxal 5'-phosphate is bound by residues Asn-189, Tyr-221, and 254-256; that span reads STS. Arg-392 is a substrate binding site.

This sequence belongs to the class-I pyridoxal-phosphate-dependent aminotransferase family. Pyridoxal 5'-phosphate is required as a cofactor.

It catalyses the reaction L-aspartate + 2-oxoglutarate = oxaloacetate + L-glutamate. In terms of biological role, main aspartate aminotransferase that couples nitrogen assimilation to aspartate synthesis. Has a weak, but significant, side activity toward kynurenine (Kyn). Oxaloacetate and 2-oxoglutarate, but not pyruvate, serve as amino acceptors, while Asp, Glu and Kyn serve as the best amino donors. Essential for axenic growth and survival of M.tuberculosis in macrophages and in mice. This is Aspartate aminotransferase from Mycobacterium tuberculosis (strain ATCC 25618 / H37Rv).